A 454-amino-acid chain; its full sequence is MLETEHANTEVHELCRQMIARIEKYGTLEGFSDSDILEVLKTIKEILEPLPCLIEIIAPVVVFGDIHGQLGDLLQFTNEVGRPPDFQYLFLGDYVDRGPNSLEVTVWLFCMKILFSKKVHLLRGNHEVRRVNTMYGFKEEMMRKRNSHLWKVFNDVFAELSICASINRKILCMHGGISPKIESWDSLTGMTKPRVHGDCEHGLIVDLIWSDPNRKDDTIQFNKMRGISTLFGKSVVDNLCTTLAIDLIIRAHEMKEKGHTFEFDNRLLTVFSAPYYSGHNSNLGSVATISKSLKLRIVTLKPNKGYDRSKLDKRTLHDFEKNFQPLDENPRKNISCQFNVPPNGQKMSPFLGEYSMFAHETQFCKKDNETPVKKPYSSNQDEDHSVLDMIRKTQKGYGVEVSLKDKVMSLESIRKKLGMTTSTTPPPPRTPSPDAPLAQSPPIPRSPPSSTENA.

Mn(2+) is bound by residues Asp-65, His-67, Asp-93, and Asn-125. His-126 (proton donor) is an active-site residue. Mn(2+)-binding residues include His-174 and His-252. The tract at residues 414-454 is disordered; it reads RKKLGMTTSTTPPPPRTPSPDAPLAQSPPIPRSPPSSTENA. Positions 424–447 are enriched in pro residues; it reads TPPPPRTPSPDAPLAQSPPIPRSP.

This sequence belongs to the PPP phosphatase family. PP-1 subfamily. It depends on Mn(2+) as a cofactor.

It carries out the reaction O-phospho-L-seryl-[protein] + H2O = L-seryl-[protein] + phosphate. The catalysed reaction is O-phospho-L-threonyl-[protein] + H2O = L-threonyl-[protein] + phosphate. This chain is Putative serine/threonine-protein phosphatase C27B7.6, found in Caenorhabditis elegans.